The chain runs to 375 residues: Putative glutamate--cysteine ligase 2 (375 aa).

Belongs to the glutamate--cysteine ligase type 2 family. YbdK subfamily.

The enzyme catalyses L-cysteine + L-glutamate + ATP = gamma-L-glutamyl-L-cysteine + ADP + phosphate + H(+). ATP-dependent carboxylate-amine ligase which exhibits weak glutamate--cysteine ligase activity. This Azoarcus sp. (strain BH72) protein is Putative glutamate--cysteine ligase 2.